Reading from the N-terminus, the 177-residue chain is Large ribosomal subunit protein uL6 (177 aa).

The interval 151-177 (YRPPEPYKGKGIRYSDEHVVRKEAKKK) is disordered. Over residues 155–177 (EPYKGKGIRYSDEHVVRKEAKKK) the composition is skewed to basic and acidic residues.

It belongs to the universal ribosomal protein uL6 family. Part of the 50S ribosomal subunit.

Its function is as follows. This protein binds to the 23S rRNA, and is important in its secondary structure. It is located near the subunit interface in the base of the L7/L12 stalk, and near the tRNA binding site of the peptidyltransferase center. The protein is Large ribosomal subunit protein uL6 of Psychrobacter sp. (strain PRwf-1).